Consider the following 286-residue polypeptide: ATP synthase gamma chain (286 aa).

It belongs to the ATPase gamma chain family. F-type ATPases have 2 components, CF(1) - the catalytic core - and CF(0) - the membrane proton channel. CF(1) has five subunits: alpha(3), beta(3), gamma(1), delta(1), epsilon(1). CF(0) has three main subunits: a, b and c.

The protein resides in the cell inner membrane. In terms of biological role, produces ATP from ADP in the presence of a proton gradient across the membrane. The gamma chain is believed to be important in regulating ATPase activity and the flow of protons through the CF(0) complex. In Shewanella sp. (strain ANA-3), this protein is ATP synthase gamma chain.